We begin with the raw amino-acid sequence, 1079 residues long: BRD4-interacting chromatin-remodeling complex-associated protein-like (1079 aa).

Disordered regions lie at residues 51–79 (NSSNADPKSSLKGVSNQLGEGPSDGLPLS) and 509–604 (LHLS…TPGT). A compositionally biased stretch (low complexity) spans 68–79 (LGEGPSDGLPLS). The span at 544-576 (SSASTAHPSLGSAVQSGSSGSNFTGDQLTQPNR) shows a compositional bias: polar residues. Positions 590–604 (SSSKSTSTFSNTPGT) are enriched in low complexity. Ser623 bears the Phosphoserine mark. 3 disordered regions span residues 669 to 691 (EKVVGSSPGHPAVQVESHSGGQK), 837 to 877 (TQFG…NHDQ), and 917 to 954 (TSEEKASRREPLKASQCSPGPEGHRKTSSRSDHGTESK). Basic and acidic residues-rich tracts occupy residues 918 to 928 (SEEKASRREPL) and 938 to 952 (EGHRKTSSRSDHGTE). The residue at position 980 (Ser980) is a Phosphoserine.

In terms of assembly, component of the multiprotein chromatin-remodeling complexes SWI/SNF: SWI/SNF-A (BAF), SWI/SNF-B (PBAF) and related complexes. The canonical complex contains a catalytic subunit (either SMARCA4/BRG1/BAF190A or SMARCA2/BRM/BAF190B) and at least SMARCE1, ACTL6A/BAF53, SMARCC1/BAF155, SMARCC2/BAF170, and SMARCB1/SNF5/BAF47. Other subunits specific to each of the complexes may also be present permitting several possible combinations developmentally and tissue specific. Component of the SWI/SNF (GBAF) subcomplex, which includes at least BICRA or BICRAL (mutually exclusive), BRD9, SS18, the core BAF subunits, SMARCA2/BRM, SMARCA4/BRG1/BAF190A, ACTL6A/BAF53, SMARCC1/BAF155, and SMARCD1/BAF60A.

In terms of biological role, component of SWI/SNF chromatin remodeling subcomplex GBAF that carries out key enzymatic activities, changing chromatin structure by altering DNA-histone contacts within a nucleosome in an ATP-dependent manner. This chain is BRD4-interacting chromatin-remodeling complex-associated protein-like, found in Homo sapiens (Human).